Here is an 800-residue protein sequence, read N- to C-terminus: Nucleolar RNA helicase 2-B (800 aa).

A compositionally biased stretch (basic and acidic residues) spans 1–14; it reads MPGKVYTDEMEGKS. Positions 1–200 are disordered; it reads MPGKVYTDEM…TDTSEITAAN (200 aa). The span at 114–124 shows a compositional bias: polar residues; sequence ETNISLSSQGG. The short motif at 221-249 is the Q motif element; sequence GDFSKFPISKDTIKNLQAKGVTYLFPIQS. The 180-residue stretch at 252 to 431 folds into the Helicase ATP-binding domain; the sequence is FHTVYSGKDV…KKYMRKQYEK (180 aa). An ATP-binding site is contributed by 265–272; it reads ARTGTGKT. The DEAD box signature appears at 374 to 377; sequence DEVD. The 157-residue stretch at 464–620 folds into the Helicase C-terminal domain; it reads DIVQVYSGSH…SSADAIKSLD (157 aa). Residues 750 to 800 are disordered; that stretch reads IQESERSFDGPRNRSFGGRGRRPFDRRNNSRNSSGGGGGRRGRSGGFRRGR. A compositionally biased stretch (basic and acidic residues) spans 752–761; the sequence is ESERSFDGPR. The segment covering 789–800 has biased composition (basic residues); sequence RRGRSGGFRRGR.

The protein belongs to the DEAD box helicase family. DDX21/DDX50 subfamily. Widely expressed. Expressed at higher level in stomach. Expressed at lower level compared to ddx21-a.

The protein localises to the nucleus. The protein resides in the nucleolus. It is found in the nucleoplasm. Its subcellular location is the cytoplasm. It localises to the cytosol. The protein localises to the mitochondrion. The catalysed reaction is ATP + H2O = ADP + phosphate + H(+). Its function is as follows. RNA helicase that acts as a sensor of the transcriptional status of both RNA polymerase (Pol) I and II: promotes ribosomal RNA (rRNA) processing and transcription from polymerase II (Pol II). Binds various RNAs, such as rRNAs, snoRNAs, 7SK and, at lower extent, mRNAs. In the nucleolus, localizes to rDNA locus, where it directly binds rRNAs and snoRNAs, and promotes rRNA transcription, processing and modification. Required for rRNA 2'-O-methylation, possibly by promoting the recruitment of late-acting snoRNAs SNORD56 and SNORD58 with pre-ribosomal complexes. In the nucleoplasm, binds 7SK RNA and is recruited to the promoters of Pol II-transcribed genes: acts by facilitating the release of P-TEFb from inhibitory 7SK snRNP in a manner that is dependent on its helicase activity, thereby promoting transcription of its target genes. Required to prevent R-loop-associated DNA damage and transcription-associated genomic instability. The chain is Nucleolar RNA helicase 2-B (ddx21-b) from Xenopus laevis (African clawed frog).